Consider the following 88-residue polypeptide: Alpha-latrotoxin-associated low molecular weight protein-2 (88 aa).

A signal peptide spans 1–19 (MLKLICIAFLVTVLTLVAG). Gln-20 bears the Pyrrolidone carboxylic acid mark. Intrachain disulfides connect Cys-30–Cys-66, Cys-46–Cys-62, and Cys-49–Cys-75.

It belongs to the arthropod CHH/MIH/GIH/VIH hormone family. The N-terminus is blocked. Expressed by the venom gland.

Its subcellular location is the secreted. Its function is as follows. May increase the toxicity of alpha-latrotoxin and/or other venom components. Is non-toxic to mice and to the cockroach Periplaneta americana. This chain is Alpha-latrotoxin-associated low molecular weight protein-2, found in Latrodectus tredecimguttatus (Mediterranean black widow spider).